Reading from the N-terminus, the 348-residue chain is Sensor protein VraS (348 aa).

The next 2 membrane-spanning stretches (helical) occupy residues 13-33 and 43-63; these read ILVY…VNII and IFGI…CIIV. One can recognise a Histidine kinase domain in the interval 150-341; sequence RLARELHDSV…RIEVKAPLNR (192 aa).

It is found in the cell membrane. It carries out the reaction ATP + protein L-histidine = ADP + protein N-phospho-L-histidine.. Functionally, member of the two-component regulatory system VraS/VraR involved in the control of the cell wall peptidoglycan biosynthesis. Probably activates VraR by phosphorylation. The chain is Sensor protein VraS (vraS) from Staphylococcus haemolyticus (strain JCSC1435).